The chain runs to 161 residues: Endoribonuclease YbeY (161 aa).

Residues His121, His125, and His131 each contribute to the Zn(2+) site.

Belongs to the endoribonuclease YbeY family. The cofactor is Zn(2+).

The protein resides in the cytoplasm. In terms of biological role, single strand-specific metallo-endoribonuclease involved in late-stage 70S ribosome quality control and in maturation of the 3' terminus of the 16S rRNA. The chain is Endoribonuclease YbeY from Xanthomonas euvesicatoria pv. vesicatoria (strain 85-10) (Xanthomonas campestris pv. vesicatoria).